A 328-amino-acid polypeptide reads, in one-letter code: Protein phosphatase 1 regulatory inhibitor subunit PPP1R7 homolog (328 aa).

LRR repeat units follow at residues 13–36 (IGDS…VELP), 37–59 (PNLI…IAQL), 61–82 (TLKK…PLSH), 86–110 (LSDL…IFTK), 111–130 (LLVY…ISKA), 131–153 (SSTL…IEHL), 154–177 (HNLQ…NFTK), 179–196 (EELW…LCGL), 197–221 (KCIK…CVAL), 223–240 (ELYL…LSAL), 241–264 (VNLR…NLTK), 266–287 (EDLW…AVTG), and 289–312 (KEKL…VAAV).

Interacts with human protein phosphatase PPP1C.

In terms of biological role, inhibitor of protein-phosphatase 1 (PP1). Binds to and inhibits PP1 activity. This chain is Protein phosphatase 1 regulatory inhibitor subunit PPP1R7 homolog, found in Arabidopsis thaliana (Mouse-ear cress).